Here is a 61-residue protein sequence, read N- to C-terminus: Photosystem II reaction center protein K (61 aa).

A propeptide spanning residues 1-24 is cleaved from the precursor; sequence MLNILNLICICLNFALYSSSFFFT. Residues 40-60 form a helical membrane-spanning segment; that stretch reads MPVIPLFFFLLAFVWQAAVSF.

This sequence belongs to the PsbK family. PSII is composed of 1 copy each of membrane proteins PsbA, PsbB, PsbC, PsbD, PsbE, PsbF, PsbH, PsbI, PsbJ, PsbK, PsbL, PsbM, PsbT, PsbX, PsbY, PsbZ, Psb30/Ycf12, at least 3 peripheral proteins of the oxygen-evolving complex and a large number of cofactors. It forms dimeric complexes.

It localises to the plastid. Its subcellular location is the chloroplast thylakoid membrane. Functionally, one of the components of the core complex of photosystem II (PSII). PSII is a light-driven water:plastoquinone oxidoreductase that uses light energy to abstract electrons from H(2)O, generating O(2) and a proton gradient subsequently used for ATP formation. It consists of a core antenna complex that captures photons, and an electron transfer chain that converts photonic excitation into a charge separation. This chain is Photosystem II reaction center protein K, found in Populus alba (White poplar).